A 1700-amino-acid polypeptide reads, in one-letter code: uncharacterized protein (1700 aa).

The helical transmembrane segment at 986 to 1006 (APITQYPVLCYLLYLLSYYLV) threads the bilayer. Coiled-coil stretches lie at residues 1246–1278 (DQNAENLLRNIHNQQIKYENQQKVVEDFIREIK) and 1657–1684 (QDMDGEPQEADELEDLKEEAESLDIEGD). A disordered region spans residues 1650–1700 (DTEPDIMQDMDGEPQEADELEDLKEEAESLDIEGDYFAEEDEDYAQEDFIE). Acidic residues predominate over residues 1651 to 1700 (TEPDIMQDMDGEPQEADELEDLKEEAESLDIEGDYFAEEDEDYAQEDFIE).

The protein resides in the host membrane. Its subcellular location is the virion. This is an uncharacterized protein from Acanthamoeba polyphaga (Amoeba).